A 251-amino-acid chain; its full sequence is MKLASLLAAQWRALVLSTGFLTRLAPARAATDAEMAAGVAHYPLVGLLAGLVCAGPFLLGLLAGHPWVQALGYAALLLWATRGLHWDGWADLMDAWGSSATGDRFWDILKDSRIGAFGVLGIVFGVLGQVVLAHEVITLGRAGALVWAPVLGRAACVVLAACVPPGTRSTLGRLTSAGATHMTVLFCAGVTAATGVALAGPPAVLAAALPCACAVVWLTALARREGGLNGDFLGACIIQGELSALLGTILA.

5 consecutive transmembrane segments (helical) span residues 44-64, 114-134, 143-163, 177-197, and 198-218; these read LVGL…LLAG, IGAF…VLAH, GALV…AACV, AGAT…TGVA, and LAGP…VVWL.

This sequence belongs to the CobS family. It depends on Mg(2+) as a cofactor.

The protein localises to the cell inner membrane. The enzyme catalyses alpha-ribazole + adenosylcob(III)inamide-GDP = adenosylcob(III)alamin + GMP + H(+). It catalyses the reaction alpha-ribazole 5'-phosphate + adenosylcob(III)inamide-GDP = adenosylcob(III)alamin 5'-phosphate + GMP + H(+). The protein operates within cofactor biosynthesis; adenosylcobalamin biosynthesis; adenosylcobalamin from cob(II)yrinate a,c-diamide: step 7/7. Its function is as follows. Joins adenosylcobinamide-GDP and alpha-ribazole to generate adenosylcobalamin (Ado-cobalamin). Also synthesizes adenosylcobalamin 5'-phosphate from adenosylcobinamide-GDP and alpha-ribazole 5'-phosphate. The chain is Adenosylcobinamide-GDP ribazoletransferase from Nitratidesulfovibrio vulgaris (strain DSM 19637 / Miyazaki F) (Desulfovibrio vulgaris).